A 324-amino-acid chain; its full sequence is Polyketide biosynthesis acyltransferase homolog BaeD (324 aa).

Residue Ser99 is part of the active site.

Its subcellular location is the cytoplasm. It functions in the pathway antibiotic biosynthesis; bacillaene biosynthesis. Probably involved in some intermediate steps for the synthesis of the antibiotic polyketide bacillaene which is involved in secondary metabolism. This is Polyketide biosynthesis acyltransferase homolog BaeD (baeD) from Bacillus velezensis (strain DSM 23117 / BGSC 10A6 / LMG 26770 / FZB42) (Bacillus amyloliquefaciens subsp. plantarum).